The following is a 116-amino-acid chain: uncharacterized protein (116 aa).

A VOC domain is found at 5–113 (EVKMVVLSTE…TGNGLVFYSP (109 aa)). An Isoglutamyl lysine isopeptide (Lys-Gln) (interchain with Q-Cter in protein Pup) cross-link involves residue Lys-76.

This is an uncharacterized protein from Mycolicibacterium smegmatis (strain ATCC 700084 / mc(2)155) (Mycobacterium smegmatis).